The following is a 98-amino-acid chain: NADH-ubiquinone oxidoreductase chain 4L (98 aa).

Helical transmembrane passes span 1–21 (MSLTYMNMFMAFTISLLGLLM), 29–49 (SLLCLEGMMLSLFVMMTMVIL), and 61–81 (IILLVFAACEAALGLSLLVMV).

This sequence belongs to the complex I subunit 4L family. In terms of assembly, core subunit of respiratory chain NADH dehydrogenase (Complex I) which is composed of 45 different subunits.

It is found in the mitochondrion inner membrane. It catalyses the reaction a ubiquinone + NADH + 5 H(+)(in) = a ubiquinol + NAD(+) + 4 H(+)(out). Core subunit of the mitochondrial membrane respiratory chain NADH dehydrogenase (Complex I) which catalyzes electron transfer from NADH through the respiratory chain, using ubiquinone as an electron acceptor. Part of the enzyme membrane arm which is embedded in the lipid bilayer and involved in proton translocation. The polypeptide is NADH-ubiquinone oxidoreductase chain 4L (MT-ND4L) (Vampyressa thyone (Northern little yellow-eared bat)).